Reading from the N-terminus, the 310-residue chain is Malate dehydrogenase (310 aa).

Residues 7–13 and Asp34 each bind NAD(+); that span reads GAAGGIG. Arg81 and Arg87 together coordinate substrate. Residues Asn94 and 117–119 contribute to the NAD(+) site; that span reads ITN. Substrate contacts are provided by Asn119 and Arg153. Residue His177 is the Proton acceptor of the active site. Met227 is a binding site for NAD(+).

It belongs to the LDH/MDH superfamily. MDH type 1 family. Homodimer.

It catalyses the reaction (S)-malate + NAD(+) = oxaloacetate + NADH + H(+). Catalyzes the reversible oxidation of malate to oxaloacetate. The chain is Malate dehydrogenase from Vibrio vulnificus (strain CMCP6).